Reading from the N-terminus, the 30-residue chain is Uperin-6.2 (30 aa).

As to expression, expressed by the skin dorsal glands.

The protein resides in the secreted. This is Uperin-6.2 from Uperoleia inundata (Floodplain toadlet).